A 216-amino-acid chain; its full sequence is Oligoribonuclease (216 aa).

The region spanning 6-171 (VVWMDCEMTG…ADIKESIREL (166 aa)) is the Exonuclease domain. Y128 is a catalytic residue.

It belongs to the oligoribonuclease family.

The protein resides in the cytoplasm. 3'-to-5' exoribonuclease specific for small oligoribonucleotides. In Nocardia farcinica (strain IFM 10152), this protein is Oligoribonuclease.